Reading from the N-terminus, the 356-residue chain is Phosphate acyltransferase (356 aa).

Belongs to the PlsX family. In terms of assembly, homodimer. Probably interacts with PlsY.

It is found in the cytoplasm. The catalysed reaction is a fatty acyl-[ACP] + phosphate = an acyl phosphate + holo-[ACP]. It participates in lipid metabolism; phospholipid metabolism. Its function is as follows. Catalyzes the reversible formation of acyl-phosphate (acyl-PO(4)) from acyl-[acyl-carrier-protein] (acyl-ACP). This enzyme utilizes acyl-ACP as fatty acyl donor, but not acyl-CoA. This chain is Phosphate acyltransferase, found in Bartonella bacilliformis (strain ATCC 35685 / KC583 / Herrer 020/F12,63).